We begin with the raw amino-acid sequence, 266 residues long: Ribosomal RNA small subunit methyltransferase A (266 aa).

Asn12, Leu14, Gly39, Glu61, Asp87, and Asn107 together coordinate S-adenosyl-L-methionine.

This sequence belongs to the class I-like SAM-binding methyltransferase superfamily. rRNA adenine N(6)-methyltransferase family. RsmA subfamily.

It localises to the cytoplasm. The catalysed reaction is adenosine(1518)/adenosine(1519) in 16S rRNA + 4 S-adenosyl-L-methionine = N(6)-dimethyladenosine(1518)/N(6)-dimethyladenosine(1519) in 16S rRNA + 4 S-adenosyl-L-homocysteine + 4 H(+). Its function is as follows. Specifically dimethylates two adjacent adenosines (A1518 and A1519) in the loop of a conserved hairpin near the 3'-end of 16S rRNA in the 30S particle. May play a critical role in biogenesis of 30S subunits. This chain is Ribosomal RNA small subunit methyltransferase A, found in Nitratidesulfovibrio vulgaris (strain DP4) (Desulfovibrio vulgaris).